The sequence spans 621 residues: Chaperone protein HtpG (621 aa).

The interval 1-328 (MTQEKKKFDA…SEDLPLNISR (328 aa)) is a; substrate-binding. Residues 329-544 (ESLQHNSVLE…DSAMDIRMER (216 aa)) are b. Residues 475–495 (SDIDVEQTTSQSEDKNTHSKK) are disordered. Positions 486–495 (SEDKNTHSKK) are enriched in basic and acidic residues. Residues 545-621 (FLIEQKQITA…LNDIVQKAIL (77 aa)) are c.

This sequence belongs to the heat shock protein 90 family. As to quaternary structure, homodimer.

The protein localises to the cytoplasm. Its function is as follows. Molecular chaperone. Has ATPase activity. The protein is Chaperone protein HtpG of Rickettsia akari (strain Hartford).